Reading from the N-terminus, the 559-residue chain is 2-isopropylmalate synthase (559 aa).

Residues 33-307 (PIWCSSDLRD…NPELDFSDID (275 aa)) form the Pyruvate carboxyltransferase domain. Mg(2+)-binding residues include aspartate 42, histidine 246, histidine 248, and asparagine 282. Residues 439-559 (ANTPYALVSH…SLSEQQAKAA (121 aa)) are regulatory domain.

This sequence belongs to the alpha-IPM synthase/homocitrate synthase family. LeuA type 2 subfamily. In terms of assembly, homodimer. Mg(2+) is required as a cofactor.

It is found in the cytoplasm. It carries out the reaction 3-methyl-2-oxobutanoate + acetyl-CoA + H2O = (2S)-2-isopropylmalate + CoA + H(+). Its pathway is amino-acid biosynthesis; L-leucine biosynthesis; L-leucine from 3-methyl-2-oxobutanoate: step 1/4. Catalyzes the condensation of the acetyl group of acetyl-CoA with 3-methyl-2-oxobutanoate (2-ketoisovalerate) to form 3-carboxy-3-hydroxy-4-methylpentanoate (2-isopropylmalate). In Pseudomonas fluorescens (strain ATCC BAA-477 / NRRL B-23932 / Pf-5), this protein is 2-isopropylmalate synthase.